The chain runs to 403 residues: S-adenosylmethionine synthase (403 aa).

An ATP-binding site is contributed by His-16. Asp-18 lines the Mg(2+) pocket. Position 44 (Glu-44) interacts with K(+). Glu-57 and Gln-100 together coordinate L-methionine. A flexible loop region spans residues 100–110 (QSNDIAQGVDH). Residues 167–169 (DAK), 238–239 (RF), Asp-247, 253–254 (RK), Ala-270, and Lys-274 contribute to the ATP site. Residue Asp-247 participates in L-methionine binding. Residue Lys-278 coordinates L-methionine.

Belongs to the AdoMet synthase family. As to quaternary structure, homotetramer; dimer of dimers. Mg(2+) is required as a cofactor. The cofactor is K(+).

Its subcellular location is the cytoplasm. The enzyme catalyses L-methionine + ATP + H2O = S-adenosyl-L-methionine + phosphate + diphosphate. It participates in amino-acid biosynthesis; S-adenosyl-L-methionine biosynthesis; S-adenosyl-L-methionine from L-methionine: step 1/1. Its function is as follows. Catalyzes the formation of S-adenosylmethionine (AdoMet) from methionine and ATP. The overall synthetic reaction is composed of two sequential steps, AdoMet formation and the subsequent tripolyphosphate hydrolysis which occurs prior to release of AdoMet from the enzyme. This is S-adenosylmethionine synthase from Verminephrobacter eiseniae (strain EF01-2).